We begin with the raw amino-acid sequence, 253 residues long: MALSMPLNGLKEEDKEPLIELFVKAGSDGESIGNCPFSQRLFMILWLKGVVFSVTTVDLKRKPADLQNLAPGTHPPFITFNSEVKTDVNKIEEFLEEVLCPPKYLKLSPKHPESNTAGMDIFAKFSAYIKNSRPEANEALERGLLKTLQKLDEYLNSPLPDEIDENSMEDIKFSTRRFLDGDEMTLADCNLLPKLHIVKVVAKKYRNFDIPKGMTGIWRYLTNAYSRDEFTNTCPSDKEVEIAYSDVAKRLTK.

Ala2 bears the N-acetylalanine mark. The interval 2–101 (ALSMPLNGLK…EEFLEEVLCP (100 aa)) is required for insertion into the membrane. Ser4 is subject to Phosphoserine. The residue at position 24 (Lys24) is an N6-acetyllysine. The G-site motif lies at 35–38 (CPFS). A helical membrane pass occupies residues 37–57 (FSQRLFMILWLKGVVFSVTTV). The GST C-terminal domain occupies 81–244 (NSEVKTDVNK…PSDKEVEIAY (164 aa)). An N6-acetyllysine modification is found at Lys130. A phosphoserine mark is found at Ser132, Ser167, and Ser236. Tyr244 carries the phosphotyrosine modification.

It belongs to the chloride channel CLIC family. In terms of assembly, monomer. Interacts with HRH30. Interacts with AKAP9. As to expression, detected in blood vessels in the retina (at protein level). Expressed to the greatest extent in vivo in heart, lung, liver, kidney, and skin.

It is found in the cytoplasm. The protein localises to the cytoskeleton. It localises to the microtubule organizing center. Its subcellular location is the centrosome. The protein resides in the cytoplasmic vesicle membrane. It is found in the nucleus. The protein localises to the cell membrane. It localises to the mitochondrion. Its subcellular location is the cell junction. The enzyme catalyses chloride(in) = chloride(out). It carries out the reaction thiocyanate(in) = thiocyanate(out). The catalysed reaction is nitrate(in) = nitrate(out). It catalyses the reaction iodide(out) = iodide(in). The enzyme catalyses bromide(in) = bromide(out). It carries out the reaction fluoride(in) = fluoride(out). The catalysed reaction is choline(out) = choline(in). In the soluble state, catalyzes glutaredoxin-like thiol disulfide exchange reactions with reduced glutathione as electron donor. Can insert into membranes and form voltage-dependent multi-ion conductive channels. Membrane insertion seems to be redox-regulated and may occur only under oxidizing conditions. Has alternate cellular functions like a potential role in angiogenesis or in maintaining apical-basolateral membrane polarity during mitosis and cytokinesis. Could also promote endothelial cell proliferation and regulate endothelial morphogenesis (tubulogenesis). Promotes cell-surface expression of HRH3. The sequence is that of Chloride intracellular channel protein 4 (Clic4) from Mus musculus (Mouse).